The chain runs to 160 residues: 3-dehydroquinate dehydratase (160 aa).

The active-site Proton acceptor is tyrosine 22. Residues asparagine 73, histidine 79, and aspartate 86 each coordinate substrate. Histidine 99 acts as the Proton donor in catalysis. Substrate contacts are provided by residues isoleucine 100–serine 101 and arginine 110.

This sequence belongs to the type-II 3-dehydroquinase family. In terms of assembly, homododecamer.

The enzyme catalyses 3-dehydroquinate = 3-dehydroshikimate + H2O. The protein operates within metabolic intermediate biosynthesis; chorismate biosynthesis; chorismate from D-erythrose 4-phosphate and phosphoenolpyruvate: step 3/7. Catalyzes a trans-dehydration via an enolate intermediate. The chain is 3-dehydroquinate dehydratase from Campylobacter lari (strain RM2100 / D67 / ATCC BAA-1060).